Consider the following 306-residue polypeptide: Phenylcoumaran benzylic ether reductase IRL1 (306 aa).

NADP(+) is bound by residues 10–16 (GATGYIG), arginine 35, and lysine 44. Residue lysine 132 is the Proton acceptor of the active site. Arginine 136 is a binding site for NADP(+).

The protein belongs to the NmrA-type oxidoreductase family. Isoflavone reductase subfamily. As to expression, highly expressed in sclerotesta. Expressed in roots, and two-to-four year stems.

The catalysed reaction is (-)-dehydrodiconiferyl alcohol + NADPH + H(+) = (S)-isodihydrodehydrodiconiferyl alcohol + NADP(+). The enzyme catalyses (+)-dehydrodiconiferyl alcohol + NADPH + H(+) = (R)-isodihydrodehydrodiconiferyl alcohol + NADP(+). It catalyses the reaction (2R,3S)-dihydrodehydrodiconiferyl alcohol + NADPH + H(+) = (S)-tetrahydrodehydrodiconiferyl alcohol + NADP(+). It carries out the reaction (2S,3R)-dihydrodehydrodiconiferyl alcohol + NADPH + H(+) = (R)-tetrahydrodehydrodiconiferyl alcohol + NADP(+). In terms of biological role, oxidoreductase involved in lignan biosynthesis. Catalyzes the NADPH-dependent reduction of phenylcoumaran benzylic ethers. Converts dehydrodiconiferyl alcohol (DDC) to isodihydrodehydrodiconiferyl alcohol (IDDDC), and dihydrodehydrodiconiferyl alcohol (DDDC) to tetrahydrodehydrodiconiferyl alcohol (TDDC). May regulate changes in lignin content and accumulation of flavonoids. This is Phenylcoumaran benzylic ether reductase IRL1 from Ginkgo biloba (Ginkgo).